The primary structure comprises 213 residues: MQPRKPQQIARELALLSLSQLPVNPKKLDTLLDDQLVSKLVLGAVRTLTSEVQDTLNNAAGELQRSNDRLLSSQTRASDLNSARTMLQEAIACTQTAINQLGTAVDFPELIQLANQDKGVRNYAKELVITVNENRHIIDELLSTALVDWQVTRLAQLDRDILQIAVAEMKFLGVPDSIAINEAVELAKRYSGDDGHRFINGVLRRVTEQKKTA.

The protein belongs to the NusB family.

Involved in transcription antitermination. Required for transcription of ribosomal RNA (rRNA) genes. Binds specifically to the boxA antiterminator sequence of the ribosomal RNA (rrn) operons. The chain is Transcription antitermination protein NusB from Nostoc punctiforme (strain ATCC 29133 / PCC 73102).